Reading from the N-terminus, the 449-residue chain is MKHITIIGAGLAGTLCGLYLARRGYEVELFESRPDIRNSPTDYGRSINLALSCRGITALKAMNLLSEVNKIMVPMRARAIHEANGEIHYQPFGRHIDEYINAISRSDLNALLLNKAKLCPNIKLHFNMKLHSLDIHNKKIKFENKNGDFVEASYHRLIGADGAPSHVRDMLKNEGIVSASRDFLSHGYKELSISKKHTKGMAREHLHLWPRDSFMLLGNPNPDDSITGSLFLANEGKDSFAELNNEEKLHLFFKTQFPDAYAAMPNLVQEFFGNPTGHLSTIQCSPWYYKDECLLIGDAAHGIIPFFGQGMNSAFEDCRILDELLDEYQDDWSRVNSVFYEHRKVNTDAIAKMSMDNYHEIHSDIRNPKFILQKQIERELMLRYPEHYVSMHVLVMFTNTPYAKAMAIGELQSGLLEQICFPITDIKELNWQEVEKLLSLYDKKLAKII.

The protein belongs to the aromatic-ring hydroxylase family. KMO subfamily. FAD serves as cofactor.

It catalyses the reaction L-kynurenine + NADPH + O2 + H(+) = 3-hydroxy-L-kynurenine + NADP(+) + H2O. The protein operates within cofactor biosynthesis; NAD(+) biosynthesis; quinolinate from L-kynurenine: step 1/3. Functionally, catalyzes the hydroxylation of L-kynurenine (L-Kyn) to form 3-hydroxy-L-kynurenine (L-3OHKyn). Required for synthesis of quinolinic acid. This is Kynurenine 3-monooxygenase from Legionella pneumophila (strain Lens).